We begin with the raw amino-acid sequence, 141 residues long: Small ribosomal subunit protein uS12 (141 aa).

Residues 118-141 are disordered; the sequence is TGVDKRRQQRSAYGAKRPKADKKK.

The protein belongs to the universal ribosomal protein uS12 family. As to quaternary structure, part of the 30S ribosomal subunit. Contacts proteins S8 and S17. May interact with IF1 in the 30S initiation complex.

With S4 and S5 plays an important role in translational accuracy. In terms of biological role, interacts with and stabilizes bases of the 16S rRNA that are involved in tRNA selection in the A site and with the mRNA backbone. Located at the interface of the 30S and 50S subunits, it traverses the body of the 30S subunit contacting proteins on the other side and probably holding the rRNA structure together. The combined cluster of proteins S8, S12 and S17 appears to hold together the shoulder and platform of the 30S subunit. The sequence is that of Small ribosomal subunit protein uS12 from Mycoplasmoides gallisepticum (strain R(low / passage 15 / clone 2)) (Mycoplasma gallisepticum).